A 274-amino-acid polypeptide reads, in one-letter code: Putative 2-succinyl-6-hydroxy-2,4-cyclohexadiene-1-carboxylate synthase (274 aa).

Residues 26–259 (AVVCLHGFTG…KAGHTVHVEQ (234 aa)) enclose the AB hydrolase-1 domain.

It belongs to the AB hydrolase superfamily. MenH family. In terms of assembly, monomer.

The catalysed reaction is 5-enolpyruvoyl-6-hydroxy-2-succinyl-cyclohex-3-ene-1-carboxylate = (1R,6R)-6-hydroxy-2-succinyl-cyclohexa-2,4-diene-1-carboxylate + pyruvate. It functions in the pathway quinol/quinone metabolism; 1,4-dihydroxy-2-naphthoate biosynthesis; 1,4-dihydroxy-2-naphthoate from chorismate: step 3/7. The protein operates within quinol/quinone metabolism; menaquinone biosynthesis. Functionally, catalyzes a proton abstraction reaction that results in 2,5-elimination of pyruvate from 2-succinyl-5-enolpyruvyl-6-hydroxy-3-cyclohexene-1-carboxylate (SEPHCHC) and the formation of 2-succinyl-6-hydroxy-2,4-cyclohexadiene-1-carboxylate (SHCHC). This is Putative 2-succinyl-6-hydroxy-2,4-cyclohexadiene-1-carboxylate synthase from Bacillus subtilis (strain 168).